The primary structure comprises 333 residues: Ketol-acid reductoisomerase (NADP(+)) (333 aa).

The 171-residue stretch at 1–171 (MSNDTQPKIA…GGARANIIKT (171 aa)) folds into the KARI N-terminal Rossmann domain. NADP(+) is bound by residues 14-17 (YGSQ), arginine 37, threonine 42, and 72-75 (DMVQ). Histidine 97 is a catalytic residue. Glycine 123 provides a ligand contact to NADP(+). Residues 172 to 317 (TFKEETETDL…KKLRAKMVWL (146 aa)) enclose the KARI C-terminal knotted domain. Mg(2+) is bound by residues aspartate 180, glutamate 184, glutamate 216, and glutamate 220. Residue serine 241 coordinates substrate.

The protein belongs to the ketol-acid reductoisomerase family. It depends on Mg(2+) as a cofactor.

The enzyme catalyses (2R)-2,3-dihydroxy-3-methylbutanoate + NADP(+) = (2S)-2-acetolactate + NADPH + H(+). It catalyses the reaction (2R,3R)-2,3-dihydroxy-3-methylpentanoate + NADP(+) = (S)-2-ethyl-2-hydroxy-3-oxobutanoate + NADPH + H(+). Its pathway is amino-acid biosynthesis; L-isoleucine biosynthesis; L-isoleucine from 2-oxobutanoate: step 2/4. The protein operates within amino-acid biosynthesis; L-valine biosynthesis; L-valine from pyruvate: step 2/4. Its function is as follows. Involved in the biosynthesis of branched-chain amino acids (BCAA). Catalyzes an alkyl-migration followed by a ketol-acid reduction of (S)-2-acetolactate (S2AL) to yield (R)-2,3-dihydroxy-isovalerate. In the isomerase reaction, S2AL is rearranged via a Mg-dependent methyl migration to produce 3-hydroxy-3-methyl-2-ketobutyrate (HMKB). In the reductase reaction, this 2-ketoacid undergoes a metal-dependent reduction by NADPH to yield (R)-2,3-dihydroxy-isovalerate. The protein is Ketol-acid reductoisomerase (NADP(+)) of Xanthomonas euvesicatoria pv. vesicatoria (strain 85-10) (Xanthomonas campestris pv. vesicatoria).